The sequence spans 849 residues: MHKHQHCCKCPECYEVTRLAALRRLEPPGYGDWQVPDPYGPSGGNGASSGYGGYSSQTLPSQAGATPTPRTKAKLIPTGRDVGPVPPKPVPGKSTPKLNGSGPGWWPECTCTNRDWYEQASPAPLLVNPEALEPSLSVNGSDGMFKYEEIVLERGNSGLGFSIAGGIDNPHVPDDPGIFITKIIPGGAAAMDGRLGVNDCVLRVNEVDVSEVVHSRAVEALKEAGPVVRLVVRRRQPPPETIMEVNLLKGPKGLGFSIAGGIGNQHIPGDNSIYITKIIEGGAAQKDGRLQIGDRLLAVNNTNLQDVRHEEAVASLKNTSDMVYLKVAKPGSIHLNDMYAPPDYASTFTALADNHISHNSSLGYLGAVESKVTYPAPPQVPPTRYSPIPRHMLAEEDFTREPRKIILHKGSTGLGFNIVGGEDGEGIFVSFILAGGPADLSGELRRGDRILSVNGVNLRNATHEQAAAALKRAGQSVTIVAQYRPEEYSRFESKIHDLREQMMNSSMSSGSGSLRTSEKRSLYVRALFDYDRTRDSCLPSQGLSFSYGDILHVINASDDEWWQARLVTPHGESEQIGVIPSKKRVEKKERARLKTVKFHARTGMIESNRDFPGLSDDYYGAKNLKGVTSNTSDSESSSKGQEDAILSYEPVTRQEIHYARPVIILGPMKDRVNDDLISEFPHKFGSCVPHTTRPRRDNEVDGQDYHFVVSREQMEKDIQDNKFIEAGQFNDNLYGTSIQSVRAVAERGKHCILDVSGNAIKRLQQAQLYPIAIFIKPKSIEALMEMNRRQTYEQANKIFDKAMKLEQEFGEYFTAIVQGDSLEEIYNKIKQIIEDQSGHYIWVPSPEKL.

The interval 32 to 101 (DWQVPDPYGP…GKSTPKLNGS (70 aa)) is disordered. A compositionally biased stretch (gly residues) spans 41 to 53 (PSGGNGASSGYGG). Polar residues predominate over residues 57 to 69 (QTLPSQAGATPTP). 3 PDZ domains span residues 149-235 (EIVL…VRRR), 244-330 (EVNL…VAKP), and 404-484 (KIIL…AQYR). Position 157 is a phosphoserine (Ser-157). The SH3 domain maps to 519-589 (KRSLYVRALF…PSKKRVEKKE (71 aa)). Residues 659-834 (ARPVIILGPM…IYNKIKQIIE (176 aa)) form the Guanylate kinase-like domain. Tyr-705 carries the phosphotyrosine modification.

Belongs to the MAGUK family. Interacts through its PDZ domains with NETO1, GRIN2B, SYNGAP1 and APC. Interacts through its first two PDZ domains with ERBB4. Interacts through its third PDZ domain with NLGN1, and probably with NLGN2 and NLGN3. Interacts through its guanylate kinase-like domain with DLGAP1, DLGAP2, DLGAP3 and DLGAP4. Interacts with FRMPD4 (via C-terminus). Interacts with LRFN1, LRFN2 and LRFN4. Interacts with FLTP. Interacts with GPR85. Interacts with DGKI (via PDZ-binding motif).

Functionally, required for learning most likely through its role in synaptic plasticity following NMDA receptor signaling. In Mus musculus (Mouse), this protein is Disks large homolog 3 (Dlg3).